The primary structure comprises 879 residues: Alanine--tRNA ligase (879 aa).

4 residues coordinate Zn(2+): histidine 566, histidine 570, cysteine 668, and histidine 672.

Belongs to the class-II aminoacyl-tRNA synthetase family. Zn(2+) serves as cofactor.

Its subcellular location is the cytoplasm. The catalysed reaction is tRNA(Ala) + L-alanine + ATP = L-alanyl-tRNA(Ala) + AMP + diphosphate. In terms of biological role, catalyzes the attachment of alanine to tRNA(Ala) in a two-step reaction: alanine is first activated by ATP to form Ala-AMP and then transferred to the acceptor end of tRNA(Ala). Also edits incorrectly charged Ser-tRNA(Ala) and Gly-tRNA(Ala) via its editing domain. In Listeria innocua serovar 6a (strain ATCC BAA-680 / CLIP 11262), this protein is Alanine--tRNA ligase.